Consider the following 176-residue polypeptide: Nucleoside triphosphate/diphosphate phosphatase (176 aa).

Arg23 (proton donor) is an active-site residue. The Mg(2+) site is built by Asn87, Asp103, Asp105, Asp107, Asp120, and Glu123.

The protein belongs to the Ntdp family. Requires Mg(2+) as cofactor.

It carries out the reaction a ribonucleoside 5'-triphosphate + H2O = a ribonucleoside 5'-diphosphate + phosphate + H(+). The catalysed reaction is a ribonucleoside 5'-diphosphate + H2O = a ribonucleoside 5'-phosphate + phosphate + H(+). Has nucleoside phosphatase activity towards nucleoside triphosphates and nucleoside diphosphates. The protein is Nucleoside triphosphate/diphosphate phosphatase of Bacillus cytotoxicus (strain DSM 22905 / CIP 110041 / 391-98 / NVH 391-98).